Here is a 214-residue protein sequence, read N- to C-terminus: Orotate phosphoribosyltransferase (214 aa).

Position 26 (K26) interacts with 5-phospho-alpha-D-ribose 1-diphosphate. Position 34 to 35 (34 to 35 (FF)) interacts with orotate. Residues 72–73 (YK), R99, K100, K103, H105, and 124–132 (DDVITAGTA) contribute to the 5-phospho-alpha-D-ribose 1-diphosphate site. Residues T128 and R157 each coordinate orotate.

Belongs to the purine/pyrimidine phosphoribosyltransferase family. PyrE subfamily. As to quaternary structure, homodimer. The cofactor is Mg(2+).

The enzyme catalyses orotidine 5'-phosphate + diphosphate = orotate + 5-phospho-alpha-D-ribose 1-diphosphate. It functions in the pathway pyrimidine metabolism; UMP biosynthesis via de novo pathway; UMP from orotate: step 1/2. Catalyzes the transfer of a ribosyl phosphate group from 5-phosphoribose 1-diphosphate to orotate, leading to the formation of orotidine monophosphate (OMP). The chain is Orotate phosphoribosyltransferase from Pseudomonas fluorescens (strain ATCC BAA-477 / NRRL B-23932 / Pf-5).